Consider the following 246-residue polypeptide: MLCCMRRTKQVEKNEDGDQKIEQDGIKPEDKAHKAATKIQASFRGHITRKKLKGEKKADAPASESEAADKKDEGPAGGAAENKESEASAATEASAADSAQLDEGSKDSSVPAEEKKGNGAADTGSEQPAPQAATPAASSEEKPAAAAETESATKASTDNSPSLKADEAQDKEEPKQADVPAADTTATTTPAAEDATAKATAQPQMETVESSQTEEKTDAVEETKPTESAQQEEVKEEESKADQENA.

The tract at residues Met-1 to Ala-246 is disordered. Residues Cys-3 and Cys-4 are each lipidated (S-palmitoyl cysteine). The segment covering Lys-9–His-33 has biased composition (basic and acidic residues). The 30-residue stretch at Ala-32–Pro-61 folds into the IQ domain. Composition is skewed to low complexity over residues Ala-87–Ala-99 and Ser-125–Thr-157. The segment covering Lys-164–Gln-176 has biased composition (basic and acidic residues). A compositionally biased stretch (low complexity) spans Ala-177–Pro-203. Basic and acidic residues-rich tracts occupy residues Thr-213–Pro-225 and Glu-237–Ala-246.

The protein belongs to the neuromodulin family. In terms of assembly, binds calmodulin with a greater affinity in the absence of Ca(2+) than in its presence. Post-translationally, palmitoylated. Palmitoylation is essential for plasma membrane association. As to expression, expressed in neurons.

Its subcellular location is the cell membrane. The protein resides in the cell projection. It localises to the growth cone membrane. The protein localises to the synapse. It is found in the filopodium membrane. In terms of biological role, this protein is associated with nerve growth. It is a major component of the motile 'growth cones' that form the tips of elongating axons. Plays a role in axonal and dendritic filopodia induction. This is Neuromodulin (GAP43) from Gallus gallus (Chicken).